We begin with the raw amino-acid sequence, 427 residues long: Enolase (427 aa).

Glutamine 162 lines the (2R)-2-phosphoglycerate pocket. Glutamate 204 serves as the catalytic Proton donor. 3 residues coordinate Mg(2+): aspartate 241, glutamate 282, and aspartate 309. (2R)-2-phosphoglycerate contacts are provided by lysine 334, arginine 363, serine 364, and lysine 385. The active-site Proton acceptor is lysine 334.

Belongs to the enolase family. Requires Mg(2+) as cofactor.

The protein localises to the cytoplasm. The protein resides in the secreted. It localises to the cell surface. It carries out the reaction (2R)-2-phosphoglycerate = phosphoenolpyruvate + H2O. It participates in carbohydrate degradation; glycolysis; pyruvate from D-glyceraldehyde 3-phosphate: step 4/5. Functionally, catalyzes the reversible conversion of 2-phosphoglycerate (2-PG) into phosphoenolpyruvate (PEP). It is essential for the degradation of carbohydrates via glycolysis. This Frankia alni (strain DSM 45986 / CECT 9034 / ACN14a) protein is Enolase.